Here is a 653-residue protein sequence, read N- to C-terminus: Transmembrane and coiled-coil domains protein 1 (653 aa).

At methionine 1 the chain carries N-acetylmethionine. 4 disordered regions span residues 1–35 (MEPS…QKLS), 58–78 (HQRR…ADPE), 112–165 (PPKM…APTS), and 204–227 (TSSA…TPDP). The Cytoplasmic segment spans residues 1-591 (MEPSGSEQLF…ARNLLGKLIN (591 aa)). Positions 20 to 34 (QDAEARKQTESEQKL) are enriched in basic and acidic residues. Residues 64-74 (SVSPHDVQQIQ) show a composition bias toward polar residues. The segment covering 113–125 (PKMKRGTSLHSRR) has biased composition (basic residues). Residues 135–144 (PQINRKSGQE) are compositionally biased toward polar residues. Residues 153-165 (RPRSSSTTDAPTS) are compositionally biased toward low complexity. Polar residues predominate over residues 204 to 218 (TSSAVASSTDGSIHT). Residues 228 to 313 (QRTKAAIAHL…RKLREVEQNG (86 aa)) adopt a coiled-coil conformation. Phosphoserine is present on residues serine 382 and serine 414. Positions 415–437 (PKYGSEEDCSSATSGSVGANSTT) are disordered. The span at 424–437 (SSATSGSVGANSTT) shows a compositional bias: polar residues. Positions 458–576 (GFDALLHEIQ…QQQQVVQLEG (119 aa)) form a coiled coil. 2 helical membrane passes run 592–612 (ILLA…NCVV) and 625–645 (LFLV…FSYV). At 646–653 (ERFFSSPR) the chain is on the cytoplasmic side.

It belongs to the TEX28 family. May form homodimers and heterodimers with TMCC2 or TMCC3 via the coiled-coil domains. Interacts with ribosomal proteins RPL4 and RPS6.

It localises to the endoplasmic reticulum membrane. In terms of biological role, endoplasmic reticulum membrane protein that promotes endoplasmic reticulum-associated endosome fission. Localizes to contact sites between the endoplasmic reticulum and endosomes and acts by promoting recruitment of the endoplasmic reticulum to endosome tubules for fission. Endosome membrane fission of early and late endosomes is essential to separate regions destined for lysosomal degradation from carriers to be recycled to the plasma membrane. The polypeptide is Transmembrane and coiled-coil domains protein 1 (Homo sapiens (Human)).